Reading from the N-terminus, the 95-residue chain is Large ribosomal subunit protein uL23cz/uL23cy (95 aa).

This sequence belongs to the universal ribosomal protein uL23 family. In terms of assembly, part of the 50S ribosomal subunit.

The protein localises to the plastid. The protein resides in the chloroplast. Functionally, binds to 23S rRNA. The polypeptide is Large ribosomal subunit protein uL23cz/uL23cy (rpl23-A) (Amborella trichopoda).